The sequence spans 704 residues: Phosphoribosylformylglycinamidine synthase subunit PurL (704 aa).

Residue His-32 is part of the active site. Tyr-35 contacts ATP. Glu-76 is a Mg(2+) binding site. Substrate is bound by residues Ser-77–His-80 and Arg-99. His-78 acts as the Proton acceptor in catalysis. Mg(2+) is bound at residue Asp-100. Gln-224 contacts substrate. Residue Asp-252 participates in Mg(2+) binding. Glu-296 to Gln-298 is a binding site for substrate. Asp-471 and Gly-508 together coordinate ATP. Residue Asn-509 participates in Mg(2+) binding. Residue Ser-511 coordinates substrate.

The protein belongs to the FGAMS family. Monomer. Part of the FGAM synthase complex composed of 1 PurL, 1 PurQ and 2 PurS subunits.

The protein localises to the cytoplasm. It carries out the reaction N(2)-formyl-N(1)-(5-phospho-beta-D-ribosyl)glycinamide + L-glutamine + ATP + H2O = 2-formamido-N(1)-(5-O-phospho-beta-D-ribosyl)acetamidine + L-glutamate + ADP + phosphate + H(+). It participates in purine metabolism; IMP biosynthesis via de novo pathway; 5-amino-1-(5-phospho-D-ribosyl)imidazole from N(2)-formyl-N(1)-(5-phospho-D-ribosyl)glycinamide: step 1/2. Functionally, part of the phosphoribosylformylglycinamidine synthase complex involved in the purines biosynthetic pathway. Catalyzes the ATP-dependent conversion of formylglycinamide ribonucleotide (FGAR) and glutamine to yield formylglycinamidine ribonucleotide (FGAM) and glutamate. The FGAM synthase complex is composed of three subunits. PurQ produces an ammonia molecule by converting glutamine to glutamate. PurL transfers the ammonia molecule to FGAR to form FGAM in an ATP-dependent manner. PurS interacts with PurQ and PurL and is thought to assist in the transfer of the ammonia molecule from PurQ to PurL. The protein is Phosphoribosylformylglycinamidine synthase subunit PurL of Pyrococcus furiosus (strain ATCC 43587 / DSM 3638 / JCM 8422 / Vc1).